Here is a 452-residue protein sequence, read N- to C-terminus: PHO85 cyclin CLG1 (452 aa).

Belongs to the cyclin family. PCL1,2 subfamily. Forms a cyclin-CDK complex with PHO85.

Its function is as follows. Cyclin partner of the cyclin-dependent kinase (CDK) PHO85. Has a role in cell integrity and polarized cell growth together with the other PCL1/PCL2 cyclin family members. The sequence is that of PHO85 cyclin CLG1 (CLG1) from Saccharomyces cerevisiae (strain ATCC 204508 / S288c) (Baker's yeast).